The following is a 68-amino-acid chain: Beta-defensin 1 (68 aa).

The first 21 residues, 1-21, serve as a signal peptide directing secretion; sequence MRTSYLLLFTLCLLLSEIASG. The propeptide occupies 22-32; that stretch reads GNFLTGLGHRS. 3 cysteine pairs are disulfide-bonded: cysteine 37–cysteine 66, cysteine 44–cysteine 59, and cysteine 49–cysteine 67.

Belongs to the beta-defensin family. Monomer. Homodimer.

The protein resides in the secreted. It localises to the membrane. Its function is as follows. Has bactericidal activity. May act as a ligand for C-C chemokine receptor CCR6. Positively regulates the sperm motility and bactericidal activity in a CCR6-dependent manner. Binds to CCR6 and triggers Ca2+ mobilization in the sperm which is important for its motility. This chain is Beta-defensin 1 (DEFB1), found in Gorilla gorilla gorilla (Western lowland gorilla).